The following is a 523-amino-acid chain: Cytokinin dehydrogenase 3 (523 aa).

The N-terminal stretch at 1–31 (MASYNLRSQVRLIAITIVIIITLSTPITTNT) is a signal peptide. In terms of domain architecture, FAD-binding PCMH-type spans 66–243 (TKIFPSAVLI…TRARIKLEVA (178 aa)). FAD-binding residues include A100, G102, and G104. Residue H105 is modified to Pros-8alpha-FAD histidine. Positions 106 and 110 each coordinate FAD. The N-linked (GlcNAc...) asparagine glycan is linked to N153. FAD contacts are provided by D167, T172, S178, I182, and I233. N-linked (GlcNAc...) asparagine glycosylation is present at N408. Residues Y476, S511, and Q514 each coordinate FAD.

The protein belongs to the oxygen-dependent FAD-linked oxidoreductase family. FAD serves as cofactor. Very weak expression in the young shoot tissues around two weeks after germination. Present in the center of the floral meristem and the boundary between long stamen primordia and gynoecial primordia.

The protein resides in the endoplasmic reticulum. The protein localises to the vacuole. The catalysed reaction is N(6)-dimethylallyladenine + A + H2O = 3-methyl-2-butenal + adenine + AH2. Catalyzes the oxidation of cytokinins, a family of N(6)-substituted adenine derivatives that are plant hormones, where the substituent is an isopentenyl group. Catalyzes in vitro the oxidation of various types of cytokinin nucleotides that are known as direct products of cytokinin biosynthesis. In association with CKX5 regulates the activity of the reproductive meristems, flower organ size and ovule formation. This Arabidopsis thaliana (Mouse-ear cress) protein is Cytokinin dehydrogenase 3 (CKX3).